The primary structure comprises 127 residues: Ribosome-binding factor A (127 aa).

It belongs to the RbfA family. Monomer. Binds 30S ribosomal subunits, but not 50S ribosomal subunits or 70S ribosomes.

The protein resides in the cytoplasm. Its function is as follows. One of several proteins that assist in the late maturation steps of the functional core of the 30S ribosomal subunit. Associates with free 30S ribosomal subunits (but not with 30S subunits that are part of 70S ribosomes or polysomes). Required for efficient processing of 16S rRNA. May interact with the 5'-terminal helix region of 16S rRNA. This chain is Ribosome-binding factor A, found in Glaesserella parasuis serovar 5 (strain SH0165) (Haemophilus parasuis).